The following is a 2512-amino-acid chain: Fatty acid synthase (2512 aa).

Glutamate 2 carries the N-acetylglutamate modification. Positions 2–406 (EDVVIAGIAG…GSNAHVILRP (405 aa)) constitute a Ketosynthase family 3 (KS3) domain. Active-site for beta-ketoacyl synthase activity residues include cysteine 161, histidine 293, and histidine 331. The tract at residues 427-815 (GRTQEAVEIL…GINVLGNNLF (389 aa)) is acyl and malonyl transferases. Catalysis depends on serine 580, which acts as the For acyl/malonyl transferase activity. An acyl-CoA is bound by residues 646-647 (DT), phenylalanine 670, and arginine 772. The segment at 844-967 (PKAEDFPSGS…ISLLENDALK (124 aa)) is N-terminal hotdog fold. Positions 844 to 1111 (PKAEDFPSGS…ASVAPRRQQE (268 aa)) constitute a PKS/mFAS DH domain. Histidine 878 (proton acceptor; for dehydratase activity) is an active-site residue. The tract at residues 984 to 1111 (AKSGLLMEDV…ASVAPRRQQE (128 aa)) is C-terminal hotdog fold. Aspartate 1034 acts as the Proton donor; for dehydratase activity in catalysis. Cysteine 1475 is modified (S-nitrosocysteine). The interval 1638–1866 (WEVPENWTLE…MIKIQEEEKQ (229 aa)) is enoyl reductase. An NADP(+)-binding site is contributed by 1675–1692 (VLIHSGSGGVGQAAIAIA). Lysine 1708 bears the N6-(pyridoxal phosphate)lysine mark. Residues 1867–2119 (YPLRSEPVKL…SFVLAEKVSV (253 aa)) form a beta-ketoacyl reductase region. Residue 1889-1904 (SYIITGGLGGFGLELA) coordinates NADP(+). Position 2093 is an S-nitrosocysteine (cysteine 2093). The Carrier domain maps to 2120-2200 (KSEGGSQRDL…ELSSKTGTAE (81 aa)). Serine 2158 carries the post-translational modification O-(pantetheine 4'-phosphoryl)serine. Positions 2209–2511 (KTGPGEPPKL…LAEPRVSVRE (303 aa)) are thioesterase. Catalysis depends on for thioesterase activity residues serine 2309 and histidine 2482.

In terms of assembly, homodimer which is arranged in a head to tail fashion. In terms of processing, S-nitrosylation of Fatty acid synthase at cysteine residues Cys-1475 or Cys-2093 is important for the enzyme dimerization. In adipocytes, S-nitrosylation of Fatty acid synthase occurs under physiological conditions and gradually increases during adipogenesis.

It carries out the reaction acetyl-CoA + n malonyl-CoA + 2n NADPH + 2n H(+) = a long-chain fatty acid + (n+1) CoA + n CO2 + 2n NADP(+).. It catalyses the reaction holo-[ACP] + acetyl-CoA = acetyl-[ACP] + CoA. The enzyme catalyses holo-[ACP] + malonyl-CoA = malonyl-[ACP] + CoA. The catalysed reaction is a fatty acyl-[ACP] + malonyl-[ACP] + H(+) = a 3-oxoacyl-[ACP] + holo-[ACP] + CO2. It carries out the reaction a (3R)-hydroxyacyl-[ACP] + NADP(+) = a 3-oxoacyl-[ACP] + NADPH + H(+). It catalyses the reaction a (3R)-hydroxyacyl-[ACP] = a (2E)-enoyl-[ACP] + H2O. The enzyme catalyses a 2,3-saturated acyl-[ACP] + NADP(+) = a (2E)-enoyl-[ACP] + NADPH + H(+). The catalysed reaction is hexadecanoyl-[ACP] + H2O = hexadecanoate + holo-[ACP] + H(+). It carries out the reaction acetyl-[ACP] + malonyl-[ACP] + H(+) = 3-oxobutanoyl-[ACP] + holo-[ACP] + CO2. It catalyses the reaction 3-oxobutanoyl-[ACP] + NADPH + H(+) = (3R)-hydroxybutanoyl-[ACP] + NADP(+). The enzyme catalyses (3R)-hydroxybutanoyl-[ACP] = (2E)-butenoyl-[ACP] + H2O. The catalysed reaction is (2E)-butenoyl-[ACP] + NADPH + H(+) = butanoyl-[ACP] + NADP(+). It carries out the reaction butanoyl-[ACP] + malonyl-[ACP] + H(+) = 3-oxohexanoyl-[ACP] + holo-[ACP] + CO2. It catalyses the reaction 3-oxohexanoyl-[ACP] + NADPH + H(+) = (3R)-hydroxyhexanoyl-[ACP] + NADP(+). The enzyme catalyses (3R)-hydroxyhexanoyl-[ACP] = (2E)-hexenoyl-[ACP] + H2O. The catalysed reaction is (2E)-hexenoyl-[ACP] + NADPH + H(+) = hexanoyl-[ACP] + NADP(+). It carries out the reaction hexanoyl-[ACP] + malonyl-[ACP] + H(+) = 3-oxooctanoyl-[ACP] + holo-[ACP] + CO2. It catalyses the reaction 3-oxooctanoyl-[ACP] + NADPH + H(+) = (3R)-hydroxyoctanoyl-[ACP] + NADP(+). The enzyme catalyses (3R)-hydroxyoctanoyl-[ACP] = (2E)-octenoyl-[ACP] + H2O. The catalysed reaction is (2E)-octenoyl-[ACP] + NADPH + H(+) = octanoyl-[ACP] + NADP(+). It carries out the reaction octanoyl-[ACP] + malonyl-[ACP] + H(+) = 3-oxodecanoyl-[ACP] + holo-[ACP] + CO2. It catalyses the reaction 3-oxodecanoyl-[ACP] + NADPH + H(+) = (3R)-hydroxydecanoyl-[ACP] + NADP(+). The enzyme catalyses (3R)-hydroxydecanoyl-[ACP] = (2E)-decenoyl-[ACP] + H2O. The catalysed reaction is (2E)-decenoyl-[ACP] + NADPH + H(+) = decanoyl-[ACP] + NADP(+). It carries out the reaction decanoyl-[ACP] + malonyl-[ACP] + H(+) = 3-oxododecanoyl-[ACP] + holo-[ACP] + CO2. It catalyses the reaction 3-oxododecanoyl-[ACP] + NADPH + H(+) = (3R)-hydroxydodecanoyl-[ACP] + NADP(+). The enzyme catalyses (3R)-hydroxydodecanoyl-[ACP] = (2E)-dodecenoyl-[ACP] + H2O. The catalysed reaction is (2E)-dodecenoyl-[ACP] + NADPH + H(+) = dodecanoyl-[ACP] + NADP(+). It carries out the reaction dodecanoyl-[ACP] + malonyl-[ACP] + H(+) = 3-oxotetradecanoyl-[ACP] + holo-[ACP] + CO2. It catalyses the reaction 3-oxotetradecanoyl-[ACP] + NADPH + H(+) = (3R)-hydroxytetradecanoyl-[ACP] + NADP(+). The enzyme catalyses (3R)-hydroxytetradecanoyl-[ACP] = (2E)-tetradecenoyl-[ACP] + H2O. The catalysed reaction is (2E)-tetradecenoyl-[ACP] + NADPH + H(+) = tetradecanoyl-[ACP] + NADP(+). It carries out the reaction tetradecanoyl-[ACP] + malonyl-[ACP] + H(+) = 3-oxohexadecanoyl-[ACP] + holo-[ACP] + CO2. It catalyses the reaction 3-oxohexadecanoyl-[ACP] + NADPH + H(+) = (3R)-hydroxyhexadecanoyl-[ACP] + NADP(+). The enzyme catalyses (3R)-hydroxyhexadecanoyl-[ACP] = (2E)-hexadecenoyl-[ACP] + H2O. The catalysed reaction is (2E)-hexadecenoyl-[ACP] + NADPH + H(+) = hexadecanoyl-[ACP] + NADP(+). It carries out the reaction hexadecanoyl-[ACP] + malonyl-[ACP] + H(+) = 3-oxooctadecanoyl-[ACP] + holo-[ACP] + CO2. It catalyses the reaction 3-oxooctadecanoyl-[ACP] + NADPH + H(+) = (3R)-hydroxyoctadecanoyl-[ACP] + NADP(+). The enzyme catalyses (3R)-hydroxyoctadecanoyl-[ACP] = (2E)-octadecenoyl-[ACP] + H2O. The catalysed reaction is (2E)-octadecenoyl-[ACP] + NADPH + H(+) = octadecanoyl-[ACP] + NADP(+). It carries out the reaction tetradecanoyl-[ACP] + H2O = tetradecanoate + holo-[ACP] + H(+). It catalyses the reaction octadecanoyl-[ACP] + H2O = octadecanoate + holo-[ACP] + H(+). It participates in lipid metabolism; fatty acid biosynthesis. With respect to regulation, cerulenin, a potent non-competitive pharmacological inhibitor of FAS, binds covalently to the active site of the condensing enzyme region, inactivating a key enzyme step in fatty acid synthesis. Its function is as follows. Fatty acid synthetase is a multifunctional enzyme that catalyzes the de novo biosynthesis of long-chain saturated fatty acids starting from acetyl-CoA and malonyl-CoA in the presence of NADPH. This multifunctional protein contains 7 catalytic activities and a site for the binding of the prosthetic group 4'-phosphopantetheine of the acyl carrier protein ([ACP]) domain. This is Fatty acid synthase (FASN) from Gallus gallus (Chicken).